The following is a 450-amino-acid chain: Putative nucleolar protein 5-3 (450 aa).

A Nop domain is found at 252–370 (IAPNLTALVG…LEARLRNLEG (119 aa)). Residues 375–423 (ACEEEEEVNDKDTKKEADDEEEPKTEECSKKRKKEAELETVEDPAKKSK) are disordered. The span at 399 to 423 (TEECSKKRKKEAELETVEDPAKKSK) shows a compositional bias: basic and acidic residues.

The protein belongs to the NOP5/NOP56 family.

It is found in the nucleus. The protein localises to the nucleolus. Its function is as follows. Required for 60S ribosomal subunit biogenesis. This chain is Putative nucleolar protein 5-3 (NOP5-3), found in Arabidopsis thaliana (Mouse-ear cress).